The chain runs to 265 residues: Esterase claE (265 aa).

Active-site charge relay system residues include Ser-121, Asp-211, and His-239.

The protein belongs to the LovG family.

Its pathway is secondary metabolite biosynthesis. In terms of biological role, esterase; part of the cla gene cluster that produces clavatol and ortho-quinone methide. The clavatol biosynthesis cluster cla and the terrestric acid cluster tra are both involved in the production of peniphenones and penilactones. The non-reducing PKS claF is responsible for the formation of clavatol from successive condensations of 3 malonyl-CoA units, presumably with a simple acetyl-CoA starter unit, and 2 methylation steps. The esterase claE probably collaborates with claF by catalyzing the hydrolysis of ACP-bound acyl intermediates to free the ACP from stalled intermediates. The clavatol oxidase claD then converts clavatol to hydroxyclavatol. Spontaneous dehydration of hydroxyclavatol leads to the accumulation of the highly active ortho-quinone methide. On the other hand, the PKS-NRPS hybrid traA is involved in the formation of crustosic acid, with the help of traB and traD. The polyketide synthase module (PKS) of traA is responsible for the synthesis of the polyketide backbone via the condensation of an acetyl-CoA starter unit with 3 malonyl-CoA units. The downstream nonribosomal peptide synthetase (NRPS) module then amidates the carboxyl end of the polyketide with L-malic acid. Because traA lacks a designated enoylreductase (ER) domain, the required activity is provided the enoyl reductase traG. Crustosic acid undergoes decarboxylation and isomerization to the terrestric acid, catalyzed by the 2-oxoglutarate-dependent dioxygenase traH. Both acids are further converted to the 2 gamma-butyrolactones (R)-5-methyltetronic acid and (S)-5-carboxylmethyltetronic acid, with involvement of the cytochrome P450 monooxygenase claJ. Spontaneous addition of the methide to these gamma-butyrolactones leads to peniphenone D and penilactone D, which undergo again stereospecific attacking by methide to give penilactones A and B. This chain is Esterase claE, found in Penicillium crustosum (Blue mold fungus).